Reading from the N-terminus, the 529-residue chain is Bifunctional purine biosynthesis protein PurH (529 aa).

The 148-residue stretch at 1-148 (MNNARPIRRA…KNHKDTTIIV (148 aa)) folds into the MGS-like domain.

Belongs to the PurH family.

The catalysed reaction is (6R)-10-formyltetrahydrofolate + 5-amino-1-(5-phospho-beta-D-ribosyl)imidazole-4-carboxamide = 5-formamido-1-(5-phospho-D-ribosyl)imidazole-4-carboxamide + (6S)-5,6,7,8-tetrahydrofolate. It carries out the reaction IMP + H2O = 5-formamido-1-(5-phospho-D-ribosyl)imidazole-4-carboxamide. It functions in the pathway purine metabolism; IMP biosynthesis via de novo pathway; 5-formamido-1-(5-phospho-D-ribosyl)imidazole-4-carboxamide from 5-amino-1-(5-phospho-D-ribosyl)imidazole-4-carboxamide (10-formyl THF route): step 1/1. It participates in purine metabolism; IMP biosynthesis via de novo pathway; IMP from 5-formamido-1-(5-phospho-D-ribosyl)imidazole-4-carboxamide: step 1/1. The sequence is that of Bifunctional purine biosynthesis protein PurH from Shewanella halifaxensis (strain HAW-EB4).